We begin with the raw amino-acid sequence, 334 residues long: UstYa family oxidase aprY (334 aa).

Residues 55–75 (IWILLTITNLIILGITVSMIV) traverse the membrane as a helical segment. N-linked (GlcNAc...) asparagine glycosylation is present at N112. The HXXHC 1 signature appears at 185-189 (HQIHC). N-linked (GlcNAc...) asparagine glycosylation occurs at N214. Residues 223–227 (HLGHC) carry the HXXHC 2 motif. The span at 306–318 (SELGEKLGKHQKQ) shows a compositional bias: basic and acidic residues. The segment at 306–334 (SELGEKLGKHQKQEGVLGQAGHQHTKRHE) is disordered.

It belongs to the ustYa family.

The protein localises to the membrane. Its pathway is secondary metabolite biosynthesis. Its function is as follows. UstYa family oxidase; part of the gene cluster that mediates the biosynthesis of the asperipin-2a, a bicyclic peptide that possesses two macrocyclic ether rings consisting of 14- and 17-membered paracyclophans. Within the pathway, aprY is responsible for the synthesis of the bicyclic structure of asperipin-2a. The pathway starts with the processing of the precursor aprA by kexin proteases to produce 11 identical copies of the hexapeptide Phe-Tyr-Tyr-Thr-Gly-Tyr. Macrocyclization of asperipin-2a may accompany an alpha-hydroxylation-dehydration sequence to give an imine, which is readily hydrolyzed to yield putative ketone intermediate. The reductase aprR may be required for the final reduction to yield asperipin-2a. This is UstYa family oxidase aprY from Aspergillus flavus (strain ATCC 200026 / FGSC A1120 / IAM 13836 / NRRL 3357 / JCM 12722 / SRRC 167).